The primary structure comprises 223 residues: MTNERTVKGVLGTKLGMTQLWDEHNRLVPVTVIQAGPCVVTQVRTPETDGYSAVQLGYGAVKAKNVTKPEAGHFEKAGVTPRRHLVELRTADASEYTLGQEIAADVFSESDFVDVTGTSKGKGTAGVMKRHGFGGLRATHGVHRKHRSPGSIGGCSTPGKVIKGLRMAGRMGVERVTVQNLQVHSVDAERGIMLVRGAVPGPKGSLLVVRSAAKKAAKNGDAA.

This sequence belongs to the universal ribosomal protein uL3 family. As to quaternary structure, part of the 50S ribosomal subunit. Forms a cluster with proteins L14 and L19.

In terms of biological role, one of the primary rRNA binding proteins, it binds directly near the 3'-end of the 23S rRNA, where it nucleates assembly of the 50S subunit. The sequence is that of Large ribosomal subunit protein uL3 from Cutibacterium acnes (strain DSM 16379 / KPA171202) (Propionibacterium acnes).